We begin with the raw amino-acid sequence, 310 residues long: Olfactory receptor 5P56 (310 aa).

Topologically, residues 1-25 (MEAQNHTTVKEFILLGLTENSTLRV) are extracellular. N-linked (GlcNAc...) asparagine glycans are attached at residues asparagine 5 and asparagine 20. A helical membrane pass occupies residues 26 to 46 (ILFMIFLGIYTVTLVGNFSII). The Cytoplasmic segment spans residues 47–54 (SLIRSCPQ). A helical membrane pass occupies residues 55–75 (LHTPMYLFLSHLALVDIGFST). At 76-99 (SITPIMLTGFLGHTVTLSVAACVA) the chain is on the extracellular side. Cysteine 97 and cysteine 189 are disulfide-bonded. The chain crosses the membrane as a helical span at residues 100–120 (QFCIAVTFGTVECFLLAVMAY). The Cytoplasmic segment spans residues 121–133 (DRYVAICSPLLYS). A helical membrane pass occupies residues 134–154 (THMSPRICFLLVGASYVGGCV). Over 155-196 (NSGTFTSCLLILSFCGPNQIDHFFCDFPAVLKLSCSDVSIIG) the chain is Extracellular. Residues 197–217 (IIPSISAGSIIVITVFVIAVS) traverse the membrane as a helical segment. Residues 218 to 237 (YTYILITILNMRSTEGRHKA) lie on the Cytoplasmic side of the membrane. The helical transmembrane segment at 238–258 (FSTCTSHLTAVTLYYGTITFI) threads the bilayer. Residues 259 to 271 (YVMPKSNYSTAQN) are Extracellular-facing. A glycan (N-linked (GlcNAc...) asparagine) is linked at asparagine 265. Residues 272-292 (KILSVFYTVVIPMLNPLIYSL) traverse the membrane as a helical segment. At 293 to 310 (RNRDVKEALRKAIIRIFP) the chain is on the cytoplasmic side.

Belongs to the G-protein coupled receptor 1 family.

The protein resides in the cell membrane. Its function is as follows. Potential odorant receptor. This chain is Olfactory receptor 5P56, found in Mus musculus (Mouse).